Here is a 247-residue protein sequence, read N- to C-terminus: Lysosomal membrane ascorbate-dependent ferrireductase CYB561A3 (247 aa).

The Cytoplasmic segment spans residues 1-3 (MRG). A helical membrane pass occupies residues 4 to 24 (IVGFYITYLLCLILGIACVVL). One can recognise a Cytochrome b561 domain in the interval 13 to 223 (LCLILGIACV…FGLVVLKILS (211 aa)). The Lumenal portion of the chain corresponds to 25–46 (VVHWNFMYRDGFAWDGSSKNFN). Residues 47–67 (WHPVLMVTGMLVLYGNAAVVY) form a helical membrane-spanning segment. His48 and Arg68 together coordinate heme b. Over 68–82 (RIPLTWGHNKLPWKL) the chain is Cytoplasmic. The L-ascorbate site is built by Lys77 and Lys81. A helical transmembrane segment spans residues 83 to 103 (LHAGLLLLSFIFSVIGLCAVF). Residues His84, 113–116 (NLYS), and His118 each bind heme b. The Lumenal portion of the chain corresponds to 104-120 (NFHNVHHTANLYSLHSW). The chain crosses the membrane as a helical span at residues 121–141 (VGICTAALFTAQWVMGFTSFL). The Cytoplasmic segment spans residues 142 to 155 (LPCTPMAVRAFVKP). An L-ascorbate-binding site is contributed by Arg150. A helical membrane pass occupies residues 156 to 176 (THVWMGAMILVLSIVSCISGI). 2 residues coordinate heme b: His157 and Glu178. Residues 177–201 (NEKLFFVLKETTNGTKPYSALPPEA) lie on the Lumenal side of the membrane. N-linked (GlcNAc...) asparagine glycosylation occurs at Asn189. A helical membrane pass occupies residues 202 to 222 (VAANSLGVIIVAFGLVVLKIL). Residues 223-247 (SNQMWQRPEPGDDEGVYRPLAYDGS) lie on the Cytoplasmic side of the membrane. Position 228 (Gln228) interacts with heme b.

Homodimer. The cofactor is heme b.

It localises to the late endosome membrane. The protein localises to the lysosome membrane. The catalysed reaction is Fe(3+)(out) + L-ascorbate(in) = monodehydro-L-ascorbate radical(in) + Fe(2+)(out) + H(+). In terms of biological role, transmembrane reductase that uses ascorbate as an electron donor in the cytoplasm and transfers electrons across membranes to reduce iron cations Fe(3+) into Fe(2+) in the lumen of the late endosome and lysosome. Reduced iron can then be extruded from the late endosome and lysosome to the cytoplasm by divalent metal-specific transporters. It is therefore most probably involved in endosomal and lysosomal cellular iron homeostasis. This is Lysosomal membrane ascorbate-dependent ferrireductase CYB561A3 (cyb561a3a) from Danio rerio (Zebrafish).